The primary structure comprises 361 residues: Rho-GTPase-activating protein 5 (361 aa).

Residues I52 to I245 form the Rho-GAP domain. Residues S306–S323 are compositionally biased toward low complexity. The tract at residues S306–S345 is disordered.

It localises to the membrane. Its function is as follows. GTPase-activating protein for Rho1. Has a role in the negative regulation of (1-3)beta-D-glucan synthase activity and cell integrity. The sequence is that of Rho-GTPase-activating protein 5 (rga5) from Schizosaccharomyces pombe (strain 972 / ATCC 24843) (Fission yeast).